Here is a 63-residue protein sequence, read N- to C-terminus: Large ribosomal subunit protein uL29 (63 aa).

The protein belongs to the universal ribosomal protein uL29 family.

In Buchnera aphidicola subsp. Acyrthosiphon kondoi (Acyrthosiphon kondoi symbiotic bacterium), this protein is Large ribosomal subunit protein uL29 (rpmC).